The sequence spans 568 residues: Chaperonin homolog Hsp-60, mitochondrial (568 aa).

It belongs to the chaperonin (HSP60) family.

The protein resides in the mitochondrion matrix. In terms of biological role, implicated in mitochondrial protein import and macromolecular assembly. May facilitate the correct folding of imported proteins. May also prevent misfolding and promote the refolding and proper assembly of unfolded polypeptides generated under stress conditions in the mitochondrial matrix. This is Chaperonin homolog Hsp-60, mitochondrial (hsp-60) from Caenorhabditis elegans.